The sequence spans 154 residues: Transcriptional repressor NrdR (154 aa).

A zinc finger spans residues 3 to 34; that stretch reads CPFCRHPDSRVVDSREADEGQAIRRRRSCPEC. The region spanning 46 to 136 is the ATP-cone domain; the sequence is LSVVKRSGVT…VYRSFSSAED (91 aa).

The protein belongs to the NrdR family. Zn(2+) serves as cofactor.

Negatively regulates transcription of bacterial ribonucleotide reductase nrd genes and operons by binding to NrdR-boxes. In Rhodococcus jostii (strain RHA1), this protein is Transcriptional repressor NrdR.